Here is a 252-residue protein sequence, read N- to C-terminus: Chitooligosaccharide deacetylase (252 aa).

The Mg(2+) site is built by histidine 61 and histidine 125.

It belongs to the YdjC deacetylase family. ChbG subfamily. In terms of assembly, homodimer. Mg(2+) is required as a cofactor.

Its subcellular location is the cytoplasm. The enzyme catalyses N,N'-diacetylchitobiose + H2O = N-acetyl-beta-D-glucosaminyl-(1-&gt;4)-D-glucosamine + acetate. It catalyses the reaction diacetylchitobiose-6'-phosphate + H2O = N'-monoacetylchitobiose-6'-phosphate + acetate. The protein operates within glycan degradation; chitin degradation. Its function is as follows. Involved in the degradation of chitin. ChbG is essential for growth on the acetylated chitooligosaccharides chitobiose and chitotriose but is dispensable for growth on cellobiose and chitosan dimer, the deacetylated form of chitobiose. Deacetylation of chitobiose-6-P and chitotriose-6-P is necessary for both the activation of the chb promoter by the regulatory protein ChbR and the hydrolysis of phosphorylated beta-glucosides by the phospho-beta-glucosidase ChbF. Catalyzes the removal of only one acetyl group from chitobiose-6-P to yield monoacetylchitobiose-6-P, the inducer of ChbR and the substrate of ChbF. This is Chitooligosaccharide deacetylase from Enterobacter sp. (strain 638).